A 318-amino-acid chain; its full sequence is MASRGVASYRTEVWSDWCPGCGDFGILAAMQKAFAELNLDPAQTVVVSGIGCSSKTPHFINVNGVHTIHGRGIAFATGIKLANPQLKVIVNGGDGDLLGIGVAHFVALGRRNLDVTVLIHNNKVYGLTKGQASPTLRRGEKVKSLPVPNLQDAVNPIALAIASGYTFVARAYSLWVDHLKEILKAAINHKGSAVIDVLQPCVTYNDIYTAEFYKDRLYKLEDDPSWDPIVRDPSEDEEKKAAAIKKAEEWGTRIPVGVFYVNPLKDTYEERLAQRNPSYSIDNPPALQPISREDGSPIVGPDEFRKIFKRFIVNVKKL.

[4Fe-4S] cluster-binding residues include cysteine 18, cysteine 21, and cysteine 52. Thiamine diphosphate contacts are provided by residues 50–53 (IGCS) and histidine 69. Aspartate 94 provides a ligand contact to Mg(2+). Position 95–96 (95–96 (GD)) interacts with thiamine diphosphate. 2 residues coordinate Mg(2+): asparagine 122 and valine 124. 126-127 (GL) provides a ligand contact to thiamine diphosphate. Cysteine 201 contacts [4Fe-4S] cluster.

In terms of assembly, heterodimer composed of an alpha and a beta subunit. The cofactor is [4Fe-4S] cluster. Thiamine diphosphate is required as a cofactor. Requires Mg(2+) as cofactor.

It catalyses the reaction a 2-oxocarboxylate + 2 oxidized [2Fe-2S]-[ferredoxin] + CoA = an acyl-CoA + 2 reduced [2Fe-2S]-[ferredoxin] + CO2 + H(+). Catalyzes the coenzyme A-dependent oxidative decarboxylation of different 2-oxoacids such as pyruvate, 2-oxobutyrate and glyoxylate to form their CoA derivatives. The polypeptide is 2-oxoacid:ferredoxin oxidoreductase 1, subunit beta (Aeropyrum pernix (strain ATCC 700893 / DSM 11879 / JCM 9820 / NBRC 100138 / K1)).